The following is a 159-amino-acid chain: SsrA-binding protein (159 aa).

The protein belongs to the SmpB family.

It localises to the cytoplasm. Functionally, required for rescue of stalled ribosomes mediated by trans-translation. Binds to transfer-messenger RNA (tmRNA), required for stable association of tmRNA with ribosomes. tmRNA and SmpB together mimic tRNA shape, replacing the anticodon stem-loop with SmpB. tmRNA is encoded by the ssrA gene; the 2 termini fold to resemble tRNA(Ala) and it encodes a 'tag peptide', a short internal open reading frame. During trans-translation Ala-aminoacylated tmRNA acts like a tRNA, entering the A-site of stalled ribosomes, displacing the stalled mRNA. The ribosome then switches to translate the ORF on the tmRNA; the nascent peptide is terminated with the 'tag peptide' encoded by the tmRNA and targeted for degradation. The ribosome is freed to recommence translation, which seems to be the essential function of trans-translation. The polypeptide is SsrA-binding protein (Dichelobacter nodosus (strain VCS1703A)).